A 299-amino-acid chain; its full sequence is Oxygen-dependent coproporphyrinogen-III oxidase (299 aa).

Ser92 lines the substrate pocket. Residues His96 and His106 each contribute to the a divalent metal cation site. Residue His106 is the Proton donor of the active site. Position 108–110 (108–110) interacts with substrate; the sequence is NVR. 2 residues coordinate a divalent metal cation: His145 and His175. Positions 240-275 are important for dimerization; it reads YVEFNLVWDRGTLFGLQTGGRTESILMSMPPLVRWE. Position 258–260 (258–260) interacts with substrate; that stretch reads GGR.

Belongs to the aerobic coproporphyrinogen-III oxidase family. Homodimer. A divalent metal cation serves as cofactor.

It is found in the cytoplasm. The enzyme catalyses coproporphyrinogen III + O2 + 2 H(+) = protoporphyrinogen IX + 2 CO2 + 2 H2O. Its pathway is porphyrin-containing compound metabolism; protoporphyrin-IX biosynthesis; protoporphyrinogen-IX from coproporphyrinogen-III (O2 route): step 1/1. Functionally, involved in the heme biosynthesis. Catalyzes the aerobic oxidative decarboxylation of propionate groups of rings A and B of coproporphyrinogen-III to yield the vinyl groups in protoporphyrinogen-IX. This chain is Oxygen-dependent coproporphyrinogen-III oxidase, found in Salmonella typhi.